The chain runs to 475 residues: Mitochondrial adenyl nucleotide antiporter SLC25A24 (475 aa).

A regulatory N-terminal domain region spans residues 1 to 173 (MLRWLRAFVL…RFWKHSTGID (173 aa)). The Mitochondrial intermembrane segment spans residues 1–197 (MLRWLRAFVL…EKKSGQWWRQ (197 aa)). EF-hand domains follow at residues 19 to 54 (EPPTRYETLFRALDRNGDGVVDIGELQQGLQSLGIP), 55 to 88 (LGQDAEEKIFTTGDVNKDGKLDFEEFMKYLKDHE), 86 to 121 (DHEKKMKLAFKSLDKNNDGKIEPSEIVQSLQMLGLH), and 122 to 157 (ISEKQAELILQSIDSDGTMTVDWNEWRDYFLFNPVT). Asp-32, Asn-34, Asp-36, Val-38, Glu-43, Asp-68, Asn-70, Asp-72, Lys-74, Glu-79, Asp-99, Asn-101, Asp-103, Lys-105, Glu-110, Asp-135, Asp-137, Thr-139, Thr-141, and Glu-146 together coordinate Ca(2+). Residues 159–168 (IEEIIRFWKH) are linker region. The C-terminal transmembrane transporter domain stretch occupies residues 174-475 (IGDSLTIPDE…MKQTLGVAQK (302 aa)). Solcar repeat units lie at residues 192–276 (GQWW…YKKL), 284–369 (LGTF…LKSY), and 381–469 (PGVM…MKQT). The chain crosses the membrane as a helical span at residues 198-215 (LLAGGVAGAVSRTSTAPL). Over 216-250 (DRLKVMMQVHGSKSMNIFGGFRQMVKEGGIRSLWR) the chain is Mitochondrial matrix. A helical transmembrane segment spans residues 251–270 (GNGTNVIKIAPETAVKFWAY). At 271 to 293 (EQYKKLLTEEGQKLGTFERFISG) the chain is on the mitochondrial intermembrane side. The helical transmembrane segment at 294 to 307 (SMAGATAQTFIYPM) threads the bilayer. Residues 308–343 (EVLKTRLAVAKTGQYSGIYGCAKKILKHEGFGAFYK) are Mitochondrial matrix-facing. Lys-318 bears the N6-acetyllysine; alternate mark. Lys-318 carries the N6-succinyllysine; alternate modification. Lys-334 bears the N6-acetyllysine mark. Residues 344-363 (GYIPNLLGIIPYAGIDLAVY) traverse the membrane as a helical segment. The Mitochondrial intermembrane portion of the chain corresponds to 364 to 386 (ELLKSYWLDNFAKDSVNPGVMVL). A helical transmembrane segment spans residues 387–404 (LSCGALSSTCGQLASYPL). Over 405–443 (ALVRTRMQAQATVEGAPQLSMVGLFQRIVSKEGVSGLYR) the chain is Mitochondrial matrix. At Lys-435 the chain carries N6-acetyllysine; alternate. Lys-435 carries the N6-succinyllysine; alternate modification. A helical transmembrane segment spans residues 444–463 (GITPNFMKVLPAVGISYVVY). Over 464–475 (ENMKQTLGVAQK) the chain is Mitochondrial intermembrane.

Belongs to the mitochondrial carrier (TC 2.A.29) family. Monomer.

The protein resides in the mitochondrion inner membrane. The catalysed reaction is Mg(2+)(out) + phosphate(in) + ATP(out) = Mg(2+)(in) + phosphate(out) + ATP(in). The enzyme catalyses ADP(out) + phosphate(in) + H(+)(out) = ADP(in) + phosphate(out) + H(+)(in). It catalyses the reaction AMP(out) + phosphate(in) = AMP(in) + phosphate(out). It carries out the reaction phosphate(in) + ATP(out) + 2 H(+)(out) = phosphate(out) + ATP(in) + 2 H(+)(in). The catalysed reaction is dADP(in) + ADP(out) = dADP(out) + ADP(in). The enzyme catalyses Mg(2+)(in) + ADP(out) + ATP(in) + H(+)(out) = Mg(2+)(out) + ADP(in) + ATP(out) + H(+)(in). It catalyses the reaction ADP(out) + diphosphate(in) = ADP(in) + diphosphate(out). It carries out the reaction dAMP(in) + ADP(out) + H(+)(out) = dAMP(out) + ADP(in) + H(+)(in). The catalysed reaction is 3'-AMP(in) + ADP(out) + H(+)(out) = 3'-AMP(out) + ADP(in) + H(+)(in). The enzyme catalyses dAMP(out) + phosphate(in) = dAMP(in) + phosphate(out). It catalyses the reaction 3'-AMP(out) + phosphate(in) = 3'-AMP(in) + phosphate(out). It carries out the reaction dADP(out) + phosphate(in) + H(+)(out) = dADP(in) + phosphate(out) + H(+)(in). Activated by an increase in cytosolic calcium levels that induce a conformational change of the N-terminal regulatory domain, uncapping the channel and allowing transport. Inhibited by bathophenanthroline, mersalyl, p-hydroxymercuribenzoate, bromcresol purple and tannic acid. Electroneutral antiporter that mediates the transport of adenyl nucleotides through the inner mitochondrial membrane. Originally identified as an ATP-magnesium/inorganic phosphate antiporter, it also acts as a broad specificity adenyl nucleotide antiporter. By regulating the mitochondrial matrix adenyl nucleotide pool could adapt to changing cellular energetic demands and indirectly regulate adenyl nucleotide-dependent metabolic pathways. In vitro, a low activity is also observed with guanyl and pyrimidine nucleotides. May play a role in protecting cells against oxidative stress-induced cell death, by buffering calcium levels in the mitochondrial matrix through the formation of calcium-phosphate precipitates. The chain is Mitochondrial adenyl nucleotide antiporter SLC25A24 from Mus musculus (Mouse).